A 241-amino-acid chain; its full sequence is MSFSRPSGRTADQLRPVRIERAFTRHAEGSVLVSFGDTRVLCTASVENRVPNFLRGKGEGWVTAEYGMLPRSTHTRSDREAARGKQGGRTLEIQRLIGRALRACVDRNALGERTITLDCDVLQADGGTRTAAITGAYVALADAVNLLLKRGDIKKHPLIGAVAAVSVGIYRGEPVLDLDYPEDSDCDTDMNVVMNDGGGFIELQGTAEGHAFRRDELNALLALAEKGVGELFELQRAALAG.

Residues Arg89 and 127 to 129 (GTR) each bind phosphate.

Belongs to the RNase PH family. In terms of assembly, homohexameric ring arranged as a trimer of dimers.

It catalyses the reaction tRNA(n+1) + phosphate = tRNA(n) + a ribonucleoside 5'-diphosphate. In terms of biological role, phosphorolytic 3'-5' exoribonuclease that plays an important role in tRNA 3'-end maturation. Removes nucleotide residues following the 3'-CCA terminus of tRNAs; can also add nucleotides to the ends of RNA molecules by using nucleoside diphosphates as substrates, but this may not be physiologically important. Probably plays a role in initiation of 16S rRNA degradation (leading to ribosome degradation) during starvation. The chain is Ribonuclease PH from Xanthomonas campestris pv. campestris (strain 8004).